The sequence spans 143 residues: Spliceosomal protein DIB1 (143 aa).

The residue at position 2 (Ala2) is an N-acetylalanine.

The protein belongs to the DIM1 family. As to quaternary structure, component of the U4/U6-U5 tri-snRNP complex composed of the U4, U6 and U5 snRNAs and at least PRP3, PRP4, PRP6, PRP8, PRP18, PRP31, PRP38, SNU13, SNU23, SNU66, SNU114, SPP381, SMB1, SMD1, SMD2, SMD3, SMX2, SMX3, LSM2, LSM3, LSM4, LSM5, LSM6, LSM7, LSM8, BRR2 and DIB1.

The protein resides in the nucleus. In terms of biological role, essential role in pre-mRNA splicing. Also essential for entry into mitosis (G2/M progression) as well as for chromosome segregation during mitosis. In Saccharomyces cerevisiae (strain ATCC 204508 / S288c) (Baker's yeast), this protein is Spliceosomal protein DIB1 (DIB1).